The primary structure comprises 43 residues: Kappa-actitoxin-Avd4p (43 aa).

3 cysteine pairs are disulfide-bonded: Cys4-Cys39, Cys6-Cys32, and Cys22-Cys40.

The protein localises to the secreted. It localises to the nematocyst. In terms of biological role, blocks Kv3 voltage-gated potassium channels. Reduces blood pressure. This chain is Kappa-actitoxin-Avd4p, found in Anemonia viridis (Snakelocks anemone).